We begin with the raw amino-acid sequence, 396 residues long: Lysophospholipid transporter LplT (396 aa).

At M1–K17 the chain is on the periplasmic side. A helical membrane pass occupies residues A18–L38. Over A39 to P52 the chain is Cytoplasmic. A helical transmembrane segment spans residues I53–A73. Over D74–L90 the chain is Periplasmic. A helical membrane pass occupies residues L91–V111. Residues G112–A144 are Cytoplasmic-facing. Residues I145–V165 traverse the membrane as a helical segment. A166 is a topological domain (periplasmic). Residues L167–L187 form a helical membrane-spanning segment. Residues A188–S225 lie on the Cytoplasmic side of the membrane. The chain crosses the membrane as a helical span at residues L226 to L246. Residues G247 to T255 are Periplasmic-facing. The chain crosses the membrane as a helical span at residues Y256–V276. At T277 to E279 the chain is on the cytoplasmic side. Residues T280 to L300 form a helical membrane-spanning segment. The Periplasmic portion of the chain corresponds to Q301–E303. A helical membrane pass occupies residues L304–P324. The Cytoplasmic segment spans residues L325 to A342. A helical membrane pass occupies residues I343 to L363. The Periplasmic segment spans residues A364 to V365. Residues M366 to I386 traverse the membrane as a helical segment. Topologically, residues T387–H396 are cytoplasmic.

Belongs to the major facilitator superfamily. LplT (TC 2.A.1.42) family.

The protein resides in the cell inner membrane. In terms of biological role, catalyzes the facilitated diffusion of 2-acyl-glycero-3-phosphoethanolamine (2-acyl-GPE) into the cell. This Shigella flexneri serotype 5b (strain 8401) protein is Lysophospholipid transporter LplT.